The sequence spans 135 residues: Protein PsiE homolog (135 aa).

The next 4 membrane-spanning stretches (helical) occupy residues 14–34, 54–74, 82–102, and 107–127; these read LQTI…IFLV, YQLI…ALIV, HFPL…LIIV, and PSDT…LYLA.

The protein belongs to the PsiE family.

It localises to the cell inner membrane. The sequence is that of Protein PsiE homolog from Pectobacterium atrosepticum (strain SCRI 1043 / ATCC BAA-672) (Erwinia carotovora subsp. atroseptica).